We begin with the raw amino-acid sequence, 388 residues long: Palmitoyltransferase ZDHHC18-B (388 aa).

Positions 1 to 33 are disordered; sequence MKNREYQQIDPQALATPTPTPPPRSLPEHKPRR. Topologically, residues 1–58 are cytoplasmic; the sequence is MKNREYQQIDPQALATPTPTPPPRSLPEHKPRRARRKWEVFPGKNRFYCDGRIIVARQ. The chain crosses the membrane as a helical span at residues 59–79; that stretch reads SGVLPLTLGLILLTSGLFFIF. At 80-87 the chain is on the lumenal side; it reads DCPFLVKH. Residues 88–108 form a helical membrane-spanning segment; the sequence is LTSCIPAIGGVLFVFVIISLL. At 109-205 the chain is on the cytoplasmic side; sequence QTSFTDPGIL…GNCVGKRNYR (97 aa). Positions 162 to 212 constitute a DHHC domain; that stretch reads KYCFTCKIFRPPRTSHCSLCDNCVERFDHHCPWVGNCVGKRNYRFFYTFIV. Catalysis depends on Cys192, which acts as the S-palmitoyl cysteine intermediate. A helical membrane pass occupies residues 206-226; the sequence is FFYTFIVSLSFLTAFIFGCVT. At 227 to 253 the chain is on the lumenal side; sequence THLALRSQGGNGLVNALQSSPASALEL. Residues 254-274 traverse the membrane as a helical segment; that stretch reads VVCFFSVWSILGLSGFHTYLV. Over 275 to 388 the chain is Cytoplasmic; sequence AANLTTNEDI…AISMQNHSTA (114 aa).

It belongs to the DHHC palmitoyltransferase family. ERF2/ZDHHC9 subfamily.

Its subcellular location is the golgi apparatus membrane. The catalysed reaction is L-cysteinyl-[protein] + hexadecanoyl-CoA = S-hexadecanoyl-L-cysteinyl-[protein] + CoA. Palmitoyltransferase that catalyzes the addition of palmitate onto various protein substrates, such as CGAS, HRAS and LCK. This is Palmitoyltransferase ZDHHC18-B from Danio rerio (Zebrafish).